Consider the following 96-residue polypeptide: Exodeoxyribonuclease 7 small subunit (96 aa).

The segment covering 61 to 79 (ALTKDESQKTNKTGFRTES) has biased composition (basic and acidic residues). Positions 61–96 (ALTKDESQKTNKTGFRTESKSTSQTSSDSVLEEDLF) are disordered. Residues 80-89 (KSTSQTSSDS) show a composition bias toward low complexity.

Belongs to the XseB family. In terms of assembly, heterooligomer composed of large and small subunits.

The protein resides in the cytoplasm. The enzyme catalyses Exonucleolytic cleavage in either 5'- to 3'- or 3'- to 5'-direction to yield nucleoside 5'-phosphates.. In terms of biological role, bidirectionally degrades single-stranded DNA into large acid-insoluble oligonucleotides, which are then degraded further into small acid-soluble oligonucleotides. This chain is Exodeoxyribonuclease 7 small subunit, found in Leptospira borgpetersenii serovar Hardjo-bovis (strain JB197).